The primary structure comprises 159 residues: uncharacterized protein (159 aa).

The 145-residue stretch at 7 to 151 folds into the N-acetyltransferase domain; that stretch reads LLINYKTLEE…NPLVWHPASE (145 aa).

This is an uncharacterized protein from Bacillus licheniformis (strain ATCC 14580 / DSM 13 / JCM 2505 / CCUG 7422 / NBRC 12200 / NCIMB 9375 / NCTC 10341 / NRRL NRS-1264 / Gibson 46).